Consider the following 1187-residue polypeptide: Metabotropic glutamate receptor-like protein Q (1187 aa).

Over 1 to 735 the chain is Extracellular; it reads MRLFFKFFYL…TIETSNIAKT (735 aa). Asn-35, Asn-44, Asn-55, Asn-177, Asn-258, Asn-275, Asn-397, Asn-402, Asn-462, Asn-526, Asn-527, Asn-557, Asn-562, and Asn-684 each carry an N-linked (GlcNAc...) asparagine glycan. Residues 736–756 traverse the membrane as a helical segment; sequence VMIITTSILVLLILLCFGITI. Topologically, residues 757 to 768 are cytoplasmic; sequence AYSKEKVINFGN. The chain crosses the membrane as a helical span at residues 769–789; it reads IVFLILMLFSCLFLCIIIYVS. Residues 790–796 lie on the Extracellular side of the membrane; that stretch reads IEPTNFS. N-linked (GlcNAc...) asparagine glycosylation is present at Asn-794. The chain crosses the membrane as a helical span at residues 797–817; sequence CQFSAIVFPIGIGILFTLTLL. Over 818–843 the chain is Cytoplasmic; the sequence is KQYKIYKLFKYSDFLKINTDNLKMVK. Residues 844-864 form a helical membrane-spanning segment; sequence YAGLIMVPVFLLVLIGVIVYP. The Extracellular portion of the chain corresponds to 865-888; the sequence is SKPTFILDLHTKTATKYCISRKYY. A helical membrane pass occupies residues 889–909; the sequence is VFSIVIVVYEVIILLTSCFIA. The Cytoplasmic segment spans residues 910 to 925; that stretch reads MKSKRYHSTPGTFYES. The helical transmembrane segment at 926–946 threads the bilayer; that stretch reads LFNSILIYNYTLVFIVLIPLF. Over 947–955 the chain is Extracellular; it reads YTLQNNPTT. The chain crosses the membrane as a helical span at residues 956–976; the sequence is IYLIYSIGSSILVFATLSIIF. Residues 977-1095 lie on the Cytoplasmic side of the membrane; that stretch reads IPKINFLFRR…SPSSQSIDFL (119 aa). Residues 1074–1105 show a composition bias toward polar residues; the sequence is IYPNQIPKQTTNSPSSQSIDFLNNPTIPKNKS. The disordered stretch occupies residues 1074–1187; sequence IYPNQIPKQT…RKSMDPSLDS (114 aa). A compositionally biased stretch (basic residues) spans 1114–1124; that stretch reads KKPKKKLKSKI. Residues 1125–1174 are compositionally biased toward low complexity; that stretch reads ISKSANSSPNINNNTINNNNNNNNNNNNNNNNNNNNNNINNNNNNNININ.

The protein belongs to the G-protein coupled receptor 3 family. GABA-B receptor subfamily.

It is found in the membrane. The protein is Metabotropic glutamate receptor-like protein Q (grlQ) of Dictyostelium discoideum (Social amoeba).